Consider the following 290-residue polypeptide: MAESVVGEFLEFLKKNKRLSKNTLESYSRDVEQFLTYMNEHGINFCSAKKSTIVNYLYFLKQQGKSQATISRALSSIKAFYHYLFAKKKIEEDPSYGINAPKVEKKEPVTLTVEQVDMLLSFDFGKDEKGLRDKALIELMYASGLKVSEVISLKIEDVNLASGYIVVRSGKERVIPIGSYAVAALQEYIEKGRKPRKGEKALFLNLRGKRLTRQGCWKIIKEYADKISPGLPLTPNILRKSFAQHMLQNGADLKTVQEMLGYEVNFGNNLLSLVSRSKMKEVYNKFHPRA.

The Core-binding (CB) domain occupies 1–85 (MAESVVGEFL…SIKAFYHYLF (85 aa)). One can recognise a Tyr recombinase domain in the interval 106–290 (KEPVTLTVEQ…EVYNKFHPRA (185 aa)). R239 is a catalytic residue. Y283 acts as the O-(3'-phospho-DNA)-tyrosine intermediate in catalysis.

It belongs to the 'phage' integrase family.

It localises to the cytoplasm. In terms of biological role, site-specific tyrosine recombinase, which acts by catalyzing the cutting and rejoining of the recombining DNA molecules. The protein is Putative tyrosine recombinase TTE1313 of Caldanaerobacter subterraneus subsp. tengcongensis (strain DSM 15242 / JCM 11007 / NBRC 100824 / MB4) (Thermoanaerobacter tengcongensis).